We begin with the raw amino-acid sequence, 426 residues long: Glutamate-1-semialdehyde 2,1-aminomutase (426 aa).

An N6-(pyridoxal phosphate)lysine modification is found at K265.

This sequence belongs to the class-III pyridoxal-phosphate-dependent aminotransferase family. HemL subfamily. The cofactor is pyridoxal 5'-phosphate.

The protein localises to the cytoplasm. It catalyses the reaction (S)-4-amino-5-oxopentanoate = 5-aminolevulinate. Its pathway is porphyrin-containing compound metabolism; protoporphyrin-IX biosynthesis; 5-aminolevulinate from L-glutamyl-tRNA(Glu): step 2/2. This Hyperthermus butylicus (strain DSM 5456 / JCM 9403 / PLM1-5) protein is Glutamate-1-semialdehyde 2,1-aminomutase.